The chain runs to 384 residues: Protein Brevis radix-like 4 (384 aa).

Disordered regions lie at residues 1–35 (MLTC…SQLK) and 50–78 (PCTA…SDFE). The BRX 1 domain occupies 150–205 (KEWVAQVEPGVLITFVSLPGGGNDLKRIRFSRDMFNKLQAQRWWADNYDKVMELYN). 2 disordered regions span residues 214-270 (FPLP…DHNS) and 304-325 (SIRS…SNAS). Over residues 221–235 (RSEDENAKVEYHPED) the composition is skewed to basic and acidic residues. A compositionally biased stretch (polar residues) spans 260–270 (YSSSDSLDHNS). The span at 309–318 (SSRDADRSEE) shows a compositional bias: basic and acidic residues. Residues 329–384 (NEWVEQDEPGVYITIKVLPGGKRELRRVRFSRERFGEMHARLWWEENRARIHEQYL) form the BRX 2 domain.

Belongs to the BRX family. Expressed in roots.

The protein localises to the nucleus. The polypeptide is Protein Brevis radix-like 4 (BRXL4) (Arabidopsis thaliana (Mouse-ear cress)).